A 164-amino-acid chain; its full sequence is Phosphopantetheine adenylyltransferase (164 aa).

Serine 10 is a binding site for substrate. ATP contacts are provided by residues 10-11 (SF) and histidine 18. 3 residues coordinate substrate: lysine 42, methionine 74, and arginine 88. ATP is bound by residues 89 to 91 (GLR), glutamate 99, and 124 to 130 (YFFVSAR).

This sequence belongs to the bacterial CoaD family. As to quaternary structure, homohexamer. Mg(2+) serves as cofactor.

It is found in the cytoplasm. The enzyme catalyses (R)-4'-phosphopantetheine + ATP + H(+) = 3'-dephospho-CoA + diphosphate. The protein operates within cofactor biosynthesis; coenzyme A biosynthesis; CoA from (R)-pantothenate: step 4/5. Its function is as follows. Reversibly transfers an adenylyl group from ATP to 4'-phosphopantetheine, yielding dephospho-CoA (dPCoA) and pyrophosphate. This chain is Phosphopantetheine adenylyltransferase, found in Anaeromyxobacter dehalogenans (strain 2CP-C).